Consider the following 994-residue polypeptide: Protein translocase subunit SecA (994 aa).

Residues Gln-85, 103–107 (GEGKT), and Asp-492 contribute to the ATP site. Over residues 868 to 888 (IPDGAGPVADAQPVRPAAARQ) the composition is skewed to low complexity. Positions 868–994 (IPDGAGPVAD…HGDPARRNTE (127 aa)) are disordered. Residues 889-900 (TPPPPSPVPSAP) are compositionally biased toward pro residues. 4 residues coordinate Zn(2+): Cys-973, Cys-975, Cys-984, and His-985. Residues 984-994 (CHGDPARRNTE) show a composition bias toward basic and acidic residues.

This sequence belongs to the SecA family. Monomer and homodimer. Part of the essential Sec protein translocation apparatus which comprises SecA, SecYEG and auxiliary proteins SecDF. Other proteins may also be involved. The cofactor is Zn(2+).

The protein resides in the cell membrane. Its subcellular location is the cytoplasm. It catalyses the reaction ATP + H2O + cellular proteinSide 1 = ADP + phosphate + cellular proteinSide 2.. Part of the Sec protein translocase complex. Interacts with the SecYEG preprotein conducting channel. Has a central role in coupling the hydrolysis of ATP to the transfer of proteins into and across the cell membrane, serving as an ATP-driven molecular motor driving the stepwise translocation of polypeptide chains across the membrane. The protein is Protein translocase subunit SecA of Frankia casuarinae (strain DSM 45818 / CECT 9043 / HFP020203 / CcI3).